The following is a 126-amino-acid chain: Protein ApaG (126 aa).

In terms of domain architecture, ApaG spans 2-126 (DVSQPRIQIQ…FRLAVPNILN (125 aa)).

The chain is Protein ApaG from Vibrio vulnificus (strain CMCP6).